A 125-amino-acid polypeptide reads, in one-letter code: Fluoride-specific ion channel FluC (125 aa).

4 helical membrane passes run 7–27 (FFIVGAGGFVGSVMRYLMAVV), 36–56 (GFPYATLAVNVLGSFMIGFLS), 63–83 (PYGRLFVMVGVLGGFTTFSTF), and 96–116 (FIFASLNVLLNVLLCLVGVFC). Na(+) is bound by residues G75 and T78.

This sequence belongs to the fluoride channel Fluc/FEX (TC 1.A.43) family.

It is found in the cell inner membrane. The enzyme catalyses fluoride(in) = fluoride(out). Its activity is regulated as follows. Na(+) is not transported, but it plays an essential structural role and its presence is essential for fluoride channel function. Fluoride-specific ion channel. Important for reducing fluoride concentration in the cell, thus reducing its toxicity. This is Fluoride-specific ion channel FluC from Elusimicrobium minutum (strain Pei191).